The chain runs to 201 residues: Ribosome maturation factor RimP (201 aa).

The protein belongs to the RimP family.

The protein resides in the cytoplasm. Functionally, required for maturation of 30S ribosomal subunits. The protein is Ribosome maturation factor RimP of Acidobacterium capsulatum (strain ATCC 51196 / DSM 11244 / BCRC 80197 / JCM 7670 / NBRC 15755 / NCIMB 13165 / 161).